A 90-amino-acid chain; its full sequence is MSRKVHCVKLQQEADGLDRPPYPGELGQRIYDNVSKQAWSMWVQQQTMLINEYRLTPADPKARSFLEREMENFFFGQGSAPPPDFSPDHS.

Belongs to the Fe(2+)-trafficking protein family.

In terms of biological role, could be a mediator in iron transactions between iron acquisition and iron-requiring processes, such as synthesis and/or repair of Fe-S clusters in biosynthetic enzymes. This is Probable Fe(2+)-trafficking protein from Halorhodospira halophila (strain DSM 244 / SL1) (Ectothiorhodospira halophila (strain DSM 244 / SL1)).